The sequence spans 547 residues: Chaperonin GroEL (547 aa).

Residues threonine 30 to proline 33, lysine 51, aspartate 87 to threonine 91, glycine 415, asparagine 479 to alanine 481, and aspartate 495 each bind ATP. The disordered stretch occupies residues alanine 524–phenylalanine 547. Positions alanine 535–phenylalanine 547 are enriched in gly residues.

The protein belongs to the chaperonin (HSP60) family. Forms a cylinder of 14 subunits composed of two heptameric rings stacked back-to-back. Interacts with the co-chaperonin GroES.

It is found in the cytoplasm. The catalysed reaction is ATP + H2O + a folded polypeptide = ADP + phosphate + an unfolded polypeptide.. Its function is as follows. Together with its co-chaperonin GroES, plays an essential role in assisting protein folding. The GroEL-GroES system forms a nano-cage that allows encapsulation of the non-native substrate proteins and provides a physical environment optimized to promote and accelerate protein folding. In Xylella fastidiosa (strain M23), this protein is Chaperonin GroEL.